The following is a 471-amino-acid chain: Mannose-1-phosphate guanylyltransferase (471 aa).

This sequence belongs to the mannose-6-phosphate isomerase type 2 family.

The enzyme catalyses alpha-D-mannose 1-phosphate + GTP + H(+) = GDP-alpha-D-mannose + diphosphate. The protein operates within nucleotide-sugar biosynthesis; GDP-alpha-D-mannose biosynthesis; GDP-alpha-D-mannose from alpha-D-mannose 1-phosphate (GTP route): step 1/1. In terms of biological role, involved in the biosynthesis of the K2 capsular polysaccharide biosynthesis. The chain is Mannose-1-phosphate guanylyltransferase (manC) from Klebsiella pneumoniae.